A 142-amino-acid polypeptide reads, in one-letter code: 3-hydroxyacyl-[acyl-carrier-protein] dehydratase FabZ (142 aa).

Histidine 50 is a catalytic residue.

The protein belongs to the thioester dehydratase family. FabZ subfamily.

It is found in the cytoplasm. It catalyses the reaction a (3R)-hydroxyacyl-[ACP] = a (2E)-enoyl-[ACP] + H2O. Functionally, involved in unsaturated fatty acids biosynthesis. Catalyzes the dehydration of short chain beta-hydroxyacyl-ACPs and long chain saturated and unsaturated beta-hydroxyacyl-ACPs. In Clostridium botulinum (strain Alaska E43 / Type E3), this protein is 3-hydroxyacyl-[acyl-carrier-protein] dehydratase FabZ.